We begin with the raw amino-acid sequence, 376 residues long: Putative F-box protein At1g53370 (376 aa).

One can recognise an F-box domain in the interval 22-71 (RNYIDSIPVDLLIDILSRFPPKSIARFYCVSKLWESILRGPDFTELYLTK).

The chain is Putative F-box protein At1g53370 from Arabidopsis thaliana (Mouse-ear cress).